The sequence spans 177 residues: Probable DNA-directed RNA polymerase subunit delta (177 aa).

An HTH HARE-type domain is found at Cys14–Trp81. The disordered stretch occupies residues Ile91–Leu177. Residues Asp106–Leu177 are compositionally biased toward acidic residues.

It belongs to the RpoE family. RNAP is composed of a core of 2 alpha, a beta and a beta' subunits. The core is associated with a delta subunit and one of several sigma factors.

Functionally, participates in both the initiation and recycling phases of transcription. In the presence of the delta subunit, RNAP displays an increased specificity of transcription, a decreased affinity for nucleic acids, and an increased efficiency of RNA synthesis because of enhanced recycling. The protein is Probable DNA-directed RNA polymerase subunit delta of Bacillus cereus (strain G9842).